The following is a 417-amino-acid chain: Glutamate-1-semialdehyde 2,1-aminomutase (417 aa).

Residue Lys267 is modified to N6-(pyridoxal phosphate)lysine.

The protein belongs to the class-III pyridoxal-phosphate-dependent aminotransferase family. HemL subfamily. As to quaternary structure, homodimer. Pyridoxal 5'-phosphate is required as a cofactor.

Its subcellular location is the cytoplasm. It catalyses the reaction (S)-4-amino-5-oxopentanoate = 5-aminolevulinate. The protein operates within porphyrin-containing compound metabolism; protoporphyrin-IX biosynthesis; 5-aminolevulinate from L-glutamyl-tRNA(Glu): step 2/2. In Solibacter usitatus (strain Ellin6076), this protein is Glutamate-1-semialdehyde 2,1-aminomutase.